A 449-amino-acid polypeptide reads, in one-letter code: Hyaluronidase-2 (449 aa).

The signal sequence occupies residues 1–23 (MYHLWIKCLAAWIFLKRCNGVHA). Disulfide bonds link Cys-47–Cys-340 and Cys-211–Cys-227. Residues Asn-67, Asn-103, and Asn-111 are each glycosylated (N-linked (GlcNAc...) asparagine). The active-site Proton donor is Glu-135. N-linked (GlcNAc...) asparagine glycosylation occurs at Asn-153. An N-linked (GlcNAc...) asparagine glycan is attached at Asn-357. Cystine bridges form between Cys-365–Cys-376, Cys-370–Cys-427, and Cys-429–Cys-438. A glycan (N-linked (GlcNAc...) asparagine) is linked at Asn-401. In terms of domain architecture, EGF-like spans 427 to 438 (CQCYQGWKGLYC).

Belongs to the glycosyl hydrolase 56 family. Monomer. In terms of tissue distribution, expressed by the venom gland.

Its subcellular location is the secreted. It carries out the reaction Random hydrolysis of (1-&gt;4)-linkages between N-acetyl-beta-D-glucosamine and D-glucuronate residues in hyaluronate.. Functionally, snake venom endo-hyaluronidase that degrades hyaluronan to smaller oligosaccharide fragments. In venom, it is not toxic by itself, but increases the diffusion of other venom proteins by degrading the extracellular matrix. In addition, it displays antiedematogenic activity. This is Hyaluronidase-2 from Bitis arietans (African puff adder).